Here is a 281-residue protein sequence, read N- to C-terminus: Large ribosomal subunit protein uL2 (281 aa).

Residues leucine 215–lysine 281 form a disordered region. Positions lysine 258 to isoleucine 269 are enriched in basic and acidic residues. A compositionally biased stretch (basic residues) spans valine 270–lysine 281.

Belongs to the universal ribosomal protein uL2 family. Part of the 50S ribosomal subunit. Forms a bridge to the 30S subunit in the 70S ribosome.

In terms of biological role, one of the primary rRNA binding proteins. Required for association of the 30S and 50S subunits to form the 70S ribosome, for tRNA binding and peptide bond formation. It has been suggested to have peptidyltransferase activity; this is somewhat controversial. Makes several contacts with the 16S rRNA in the 70S ribosome. The protein is Large ribosomal subunit protein uL2 of Pelagibacter ubique (strain HTCC1062).